Here is a 387-residue protein sequence, read N- to C-terminus: uncharacterized protein (387 aa).

Residues 1-27 form the signal peptide; it reads MKKWMITIAMLILAGIALFVFISPLKS.

This is an uncharacterized protein from Bacillus subtilis (strain 168).